Here is a 117-residue protein sequence, read N- to C-terminus: Large ribosomal subunit protein bL19 (117 aa).

Belongs to the bacterial ribosomal protein bL19 family.

Its function is as follows. This protein is located at the 30S-50S ribosomal subunit interface and may play a role in the structure and function of the aminoacyl-tRNA binding site. In Christiangramia forsetii (strain DSM 17595 / CGMCC 1.15422 / KT0803) (Gramella forsetii), this protein is Large ribosomal subunit protein bL19.